The sequence spans 557 residues: Formate--tetrahydrofolate ligase (557 aa).

65–72 (TPAGEGKT) serves as a coordination point for ATP.

This sequence belongs to the formate--tetrahydrofolate ligase family.

The catalysed reaction is (6S)-5,6,7,8-tetrahydrofolate + formate + ATP = (6R)-10-formyltetrahydrofolate + ADP + phosphate. Its pathway is one-carbon metabolism; tetrahydrofolate interconversion. The sequence is that of Formate--tetrahydrofolate ligase from Methylorubrum extorquens (strain CM4 / NCIMB 13688) (Methylobacterium extorquens).